The primary structure comprises 301 residues: Acetylglutamate kinase (301 aa).

Substrate contacts are provided by residues 68 to 69 (GG), Arg90, and Asn195.

This sequence belongs to the acetylglutamate kinase family. ArgB subfamily.

It is found in the cytoplasm. It carries out the reaction N-acetyl-L-glutamate + ATP = N-acetyl-L-glutamyl 5-phosphate + ADP. It functions in the pathway amino-acid biosynthesis; L-arginine biosynthesis; N(2)-acetyl-L-ornithine from L-glutamate: step 2/4. Functionally, catalyzes the ATP-dependent phosphorylation of N-acetyl-L-glutamate. The chain is Acetylglutamate kinase from Ectopseudomonas mendocina (strain ymp) (Pseudomonas mendocina).